Reading from the N-terminus, the 424-residue chain is Histidine--tRNA ligase (424 aa).

The protein belongs to the class-II aminoacyl-tRNA synthetase family. As to quaternary structure, homodimer.

It localises to the cytoplasm. It catalyses the reaction tRNA(His) + L-histidine + ATP = L-histidyl-tRNA(His) + AMP + diphosphate + H(+). The sequence is that of Histidine--tRNA ligase from Edwardsiella ictaluri (strain 93-146).